We begin with the raw amino-acid sequence, 352 residues long: Biotin synthase (352 aa).

The 219-residue stretch at Asn-44–Lys-262 folds into the Radical SAM core domain. Cys-59, Cys-63, and Cys-66 together coordinate [4Fe-4S] cluster. Residues Cys-103, Cys-134, Cys-194, and Arg-266 each contribute to the [2Fe-2S] cluster site.

It belongs to the radical SAM superfamily. Biotin synthase family. As to quaternary structure, homodimer. [4Fe-4S] cluster is required as a cofactor. Requires [2Fe-2S] cluster as cofactor.

It carries out the reaction (4R,5S)-dethiobiotin + (sulfur carrier)-SH + 2 reduced [2Fe-2S]-[ferredoxin] + 2 S-adenosyl-L-methionine = (sulfur carrier)-H + biotin + 2 5'-deoxyadenosine + 2 L-methionine + 2 oxidized [2Fe-2S]-[ferredoxin]. Its pathway is cofactor biosynthesis; biotin biosynthesis; biotin from 7,8-diaminononanoate: step 2/2. Its function is as follows. Catalyzes the conversion of dethiobiotin (DTB) to biotin by the insertion of a sulfur atom into dethiobiotin via a radical-based mechanism. This Pseudomonas putida (strain GB-1) protein is Biotin synthase.